The following is a 240-amino-acid chain: Ribonuclease PH (240 aa).

Residues R87 and 125–127 (GTR) contribute to the phosphate site.

It belongs to the RNase PH family. As to quaternary structure, homohexameric ring arranged as a trimer of dimers.

The enzyme catalyses tRNA(n+1) + phosphate = tRNA(n) + a ribonucleoside 5'-diphosphate. Phosphorolytic 3'-5' exoribonuclease that plays an important role in tRNA 3'-end maturation. Removes nucleotide residues following the 3'-CCA terminus of tRNAs; can also add nucleotides to the ends of RNA molecules by using nucleoside diphosphates as substrates, but this may not be physiologically important. Probably plays a role in initiation of 16S rRNA degradation (leading to ribosome degradation) during starvation. The chain is Ribonuclease PH from Crocosphaera subtropica (strain ATCC 51142 / BH68) (Cyanothece sp. (strain ATCC 51142)).